The primary structure comprises 274 residues: 4-diphosphocytidyl-2-C-methyl-D-erythritol kinase (274 aa).

The active site involves K14. 94 to 104 (PMQAGLGGGSS) lines the ATP pocket. Residue D134 is part of the active site.

The protein belongs to the GHMP kinase family. IspE subfamily.

The catalysed reaction is 4-CDP-2-C-methyl-D-erythritol + ATP = 4-CDP-2-C-methyl-D-erythritol 2-phosphate + ADP + H(+). It participates in isoprenoid biosynthesis; isopentenyl diphosphate biosynthesis via DXP pathway; isopentenyl diphosphate from 1-deoxy-D-xylulose 5-phosphate: step 3/6. Functionally, catalyzes the phosphorylation of the position 2 hydroxy group of 4-diphosphocytidyl-2C-methyl-D-erythritol. In Thermosipho melanesiensis (strain DSM 12029 / CIP 104789 / BI429), this protein is 4-diphosphocytidyl-2-C-methyl-D-erythritol kinase.